We begin with the raw amino-acid sequence, 498 residues long: ATP synthase subunit beta, chloroplastic (498 aa).

172–179 (GGAGVGKT) provides a ligand contact to ATP.

This sequence belongs to the ATPase alpha/beta chains family. In terms of assembly, F-type ATPases have 2 components, CF(1) - the catalytic core - and CF(0) - the membrane proton channel. CF(1) has five subunits: alpha(3), beta(3), gamma(1), delta(1), epsilon(1). CF(0) has four main subunits: a(1), b(1), b'(1) and c(9-12).

The protein resides in the plastid. It localises to the chloroplast thylakoid membrane. The catalysed reaction is ATP + H2O + 4 H(+)(in) = ADP + phosphate + 5 H(+)(out). Functionally, produces ATP from ADP in the presence of a proton gradient across the membrane. The catalytic sites are hosted primarily by the beta subunits. This chain is ATP synthase subunit beta, chloroplastic, found in Nymphaea odorata (White water lily).